A 1424-amino-acid polypeptide reads, in one-letter code: S-layer protein A (1424 aa).

The signal sequence occupies residues 1 to 24 (MNKLVGLLVSSLFLASILIGIAPA). N-linked (GlcNAc...) asparagine glycosylation is found at Asn-60, Asn-70, Asn-276, Asn-295, Asn-342, Asn-358, Asn-377, Asn-468, Asn-517, Asn-545, Asn-559, Asn-581, Asn-633, Asn-714, Asn-875, Asn-914, Asn-955, Asn-989, Asn-1018, Asn-1042, Asn-1093, Asn-1134, Asn-1197, Asn-1217, Asn-1252, Asn-1276, Asn-1304, and Asn-1419.

The protein belongs to the Sulfolobales SlaA family. The mushroom-shaped unit cells of the Sulfolobales' S-layers may consist of three SlaB subunits and six SlaA subunits. Post-translationally, glycosylated. C-terminal glycosylation sites are modified with a heterogeneous family of glycans, with the largest having a composition Glc(1)Man(2)GlcNAc(2) plus 6-sulfoquinovose (QuiS).

The protein localises to the secreted. The protein resides in the cell wall. It is found in the S-layer. Functionally, S-layer large protein. May form the highly ordered outer sheath. This is S-layer protein A from Sulfolobus acidocaldarius (strain ATCC 33909 / DSM 639 / JCM 8929 / NBRC 15157 / NCIMB 11770).